Here is a 458-residue protein sequence, read N- to C-terminus: tRNA modification GTPase MnmE (458 aa).

R28, E85, and K124 together coordinate (6S)-5-formyl-5,6,7,8-tetrahydrofolate. One can recognise a TrmE-type G domain in the interval 220–381; that stretch reads GMNVVIAGRP…LKEHLKAVMG (162 aa). A K(+)-binding site is contributed by N230. Residues 230-235, 249-255, and 274-277 each bind GTP; these read NAGKSS, TDIEGTT, and DTAG. S234 contacts Mg(2+). T249, I251, and T254 together coordinate K(+). A Mg(2+)-binding site is contributed by T255. K458 contacts (6S)-5-formyl-5,6,7,8-tetrahydrofolate.

Belongs to the TRAFAC class TrmE-Era-EngA-EngB-Septin-like GTPase superfamily. TrmE GTPase family. As to quaternary structure, homodimer. Heterotetramer of two MnmE and two MnmG subunits. The cofactor is K(+).

Its subcellular location is the cytoplasm. Its function is as follows. Exhibits a very high intrinsic GTPase hydrolysis rate. Involved in the addition of a carboxymethylaminomethyl (cmnm) group at the wobble position (U34) of certain tRNAs, forming tRNA-cmnm(5)s(2)U34. The protein is tRNA modification GTPase MnmE of Chromohalobacter salexigens (strain ATCC BAA-138 / DSM 3043 / CIP 106854 / NCIMB 13768 / 1H11).